The chain runs to 468 residues: 6-phospho-beta-galactosidase (468 aa).

5 residues coordinate D-galactose 6-phosphate: Gln19, His116, Asn159, Glu160, and Asn297. Glu160 (proton donor) is an active-site residue. Glu375 (nucleophile) is an active-site residue. D-galactose 6-phosphate-binding residues include Ser428, Trp429, Lys435, and Tyr437.

Belongs to the glycosyl hydrolase 1 family.

The catalysed reaction is a 6-phospho-beta-D-galactoside + H2O = D-galactose 6-phosphate + an alcohol. Its pathway is carbohydrate metabolism; lactose degradation; D-galactose 6-phosphate and beta-D-glucose from lactose 6-phosphate: step 1/1. This chain is 6-phospho-beta-galactosidase, found in Streptococcus pyogenes serotype M28 (strain MGAS6180).